A 405-amino-acid chain; its full sequence is Glucoside xylosyltransferase 1 (405 aa).

The Cytoplasmic portion of the chain corresponds to 1–2; the sequence is MR. The helical; Signal-anchor for type II membrane protein transmembrane segment at 3 to 23 threads the bilayer; sequence IYLRTFGLCIVVALLSLVFLF. The Lumenal portion of the chain corresponds to 24-405; it reads SKHDEGSFSA…RLQRATPPGD (382 aa). The interval 46–65 is disordered; it reads SFNGAKAKQRPTATTSHRDV. N-linked (GlcNAc...) asparagine glycosylation is found at N202, N243, N277, and N372.

It belongs to the glycosyltransferase 8 family.

It is found in the membrane. The catalysed reaction is 3-O-(beta-D-glucosyl)-L-seryl-[EGF-like domain protein] + UDP-alpha-D-xylose = 3-O-[alpha-D-xylosyl-(1-&gt;3)-beta-D-glucosyl]-L-seryl-[EGF-like domain protein] + UDP + H(+). Its function is as follows. Glycosyltransferase which elongates the O-linked glucose attached to EGF-like repeats in the extracellular domain of Notch proteins by catalyzing the addition of xylose. The chain is Glucoside xylosyltransferase 1 (gxylt1) from Danio rerio (Zebrafish).